The following is a 104-amino-acid chain: Co-chaperonin GroES 1 (104 aa).

The protein belongs to the GroES chaperonin family. In terms of assembly, heptamer of 7 subunits arranged in a ring. Interacts with the chaperonin GroEL.

Its subcellular location is the cytoplasm. In terms of biological role, together with the chaperonin GroEL, plays an essential role in assisting protein folding. The GroEL-GroES system forms a nano-cage that allows encapsulation of the non-native substrate proteins and provides a physical environment optimized to promote and accelerate protein folding. GroES binds to the apical surface of the GroEL ring, thereby capping the opening of the GroEL channel. This is Co-chaperonin GroES 1 from Mesorhizobium japonicum (strain LMG 29417 / CECT 9101 / MAFF 303099) (Mesorhizobium loti (strain MAFF 303099)).